Reading from the N-terminus, the 472-residue chain is Ammonium transporter Rh type C (472 aa).

Residues 1–9 are Cytoplasmic-facing; sequence MAWNTNLRW. Residues 10 to 30 traverse the membrane as a helical segment; it reads RLPLTCLLLEVVMVILFGVFV. Over 31–51 the chain is Extracellular; sequence RYDFDADAHWWSWRTEFYYRY. Residues 52-72 form a helical membrane-spanning segment; the sequence is PSFQDVHVMVFVGFGFLMTFL. Topologically, residues 73-76 are cytoplasmic; sequence QRYG. The helical transmembrane segment at 77–97 threads the bilayer; that stretch reads FSAVGFNFLLAAFGIQWALLM. At 98–114 the chain is on the extracellular side; the sequence is QGWFHFLQGRYIVVGVE. The helical transmembrane segment at 115–135 threads the bilayer; it reads NLINADFCVASVCVAFGAVLG. Residues 136–139 are Cytoplasmic-facing; sequence KVSP. The helical transmembrane segment at 140-160 threads the bilayer; sequence IQLLIMTFFQVTLFAVNEFIL. Topologically, residues 161 to 168 are extracellular; that stretch reads LNLLKVKD. A helical membrane pass occupies residues 169-191; it reads AGGSMTIHTFGAYFGLTVTRILY. At 192–209 the chain is on the cytoplasmic side; the sequence is RRNLEQSKERQNSVYQSD. Residues 210–230 traverse the membrane as a helical segment; it reads LFAMIGTLFLWMYWPSFNSAI. The Extracellular segment spans residues 231–241; sequence SYHGDSQHRAA. A helical transmembrane segment spans residues 242–262; that stretch reads INTYCSLAACVLTSVAISSAL. Residues 263–294 lie on the Cytoplasmic side of the membrane; that stretch reads HKKGKLDMVHIQNATPAGGVAVGTAAEMMLMP. The chain crosses the membrane as a helical span at residues 295–315; sequence YGALIVGFVCGIISTLGFVYL. Over 316 to 336 the chain is Extracellular; the sequence is TPFLESRLHIQDTCGINNLHG. The chain crosses the membrane as a helical span at residues 337 to 357; the sequence is IPGIIGGIVGAVTAASASLEV. At 358–388 the chain is on the cytoplasmic side; sequence YGKEGLVHSFDFQGFKRDWTARTQGKFQIYG. Residues 389 to 409 traverse the membrane as a helical segment; sequence LLVTLAMALMGGIIVGVGLIL. The Extracellular segment spans residues 410–450; that stretch reads RLPFWGQPSDENCFEDAVYWEMPEGNSTVYIPEDPTFKPSG. Asparagine 435 is a glycosylation site (N-linked (GlcNAc...) asparagine). A helical membrane pass occupies residues 451 to 471; that stretch reads PSVPSVPMVSPLPMASSVPLV. Proline 472 is a topological domain (cytoplasmic).

It belongs to the ammonium transporter (TC 2.A.49) family. Rh subfamily. As to quaternary structure, homotrimer. Post-translationally, N-glycosylated.

The protein localises to the cell membrane. It is found in the apical cell membrane. It catalyses the reaction NH4(+)(in) = NH4(+)(out). The catalysed reaction is methylamine(out) = methylamine(in). It carries out the reaction CO2(out) = CO2(in). Functionally, ammonium transporter involved in the maintenance of acid-base homeostasis. Transports ammonium and its related derivative methylammonium across the plasma membrane of epithelial cells likely contributing to renal transepithelial ammonia transport and ammonia metabolism. Postulated to primarily mediate an electroneutral bidirectional transport of NH3 ammonia species according to a mechanism that implies interaction of an NH4(+) ion with acidic residues of the pore entry followed by dissociation of NH4(+) into NH3 and H(+). As a result NH3 transits through the central pore and is protonated on the extracellular side reforming NH4(+). May act as a CO2 channel providing for renal acid secretion. This Pongo abelii (Sumatran orangutan) protein is Ammonium transporter Rh type C (RHCG).